Reading from the N-terminus, the 162-residue chain is NADH-quinone oxidoreductase subunit I 2 (162 aa).

4Fe-4S ferredoxin-type domains follow at residues 53-83 and 93-122; these read LRRYPNGEERCIACKLCEAVCPALAITIDSE and TRYDIDLFKCIYCGFCEESCPVDSIVETRI. 8 residues coordinate [4Fe-4S] cluster: cysteine 63, cysteine 66, cysteine 69, cysteine 73, cysteine 102, cysteine 105, cysteine 108, and cysteine 112.

This sequence belongs to the complex I 23 kDa subunit family. NDH-1 is composed of 14 different subunits. Subunits NuoA, H, J, K, L, M, N constitute the membrane sector of the complex. The cofactor is [4Fe-4S] cluster.

It is found in the cell inner membrane. It carries out the reaction a quinone + NADH + 5 H(+)(in) = a quinol + NAD(+) + 4 H(+)(out). NDH-1 shuttles electrons from NADH, via FMN and iron-sulfur (Fe-S) centers, to quinones in the respiratory chain. The immediate electron acceptor for the enzyme in this species is believed to be ubiquinone. Couples the redox reaction to proton translocation (for every two electrons transferred, four hydrogen ions are translocated across the cytoplasmic membrane), and thus conserves the redox energy in a proton gradient. The polypeptide is NADH-quinone oxidoreductase subunit I 2 (Nitrosococcus oceani (strain ATCC 19707 / BCRC 17464 / JCM 30415 / NCIMB 11848 / C-107)).